The primary structure comprises 230 residues: V-type proton ATPase subunit E (230 aa).

It belongs to the V-ATPase E subunit family. In terms of assembly, V-ATPase is a heteromultimeric enzyme composed of a peripheral catalytic V1 complex (components A to H) attached to an integral membrane V0 proton pore complex (components: a, c, c', c'' and d).

In terms of biological role, subunit of the peripheral V1 complex of vacuolar ATPase essential for assembly or catalytic function. V-ATPase is responsible for acidifying a variety of intracellular compartments in eukaryotic cells. This Citrus unshiu (Satsuma mandarin) protein is V-type proton ATPase subunit E (VATE).